Reading from the N-terminus, the 297-residue chain is MATNLRGVMAALLTPFDQQQALDKASLRRLVQFNIQQGIDGLYVGGSTGEAFVQSLSEREQVLEIVAEEAKGQIKLIAHVGCVSTAESQQLAASAKRYGFDAVSAVTPFYYPFSFEEHCDHYRAIIDSADGLPMVVYNIPALSGVKLTLDQINTLVTLPGVGALKQTSGDLYQMEQIRREHPDLVLYNGYDEIFASGLLAGADGGIGSTYNIMGWRYQGIVKALKEGDIQTAQKLQTECNKVIDLLIKTGVFRGLKTVLHYMDVVSVPLCRKPFGPVDEKYLPELKALAQQLMQERG.

2 residues coordinate aceneuramate: Ser-47 and Thr-48. The active-site Proton donor is the Tyr-137. The active-site Schiff-base intermediate with substrate is the Lys-165. The aceneuramate site is built by Thr-167, Gly-189, Asp-191, Glu-192, and Ser-208.

It belongs to the DapA family. NanA subfamily. In terms of assembly, homotetramer.

It is found in the cytoplasm. It catalyses the reaction aceneuramate = aldehydo-N-acetyl-D-mannosamine + pyruvate. It participates in amino-sugar metabolism; N-acetylneuraminate degradation; D-fructose 6-phosphate from N-acetylneuraminate: step 1/5. Functionally, catalyzes the reversible aldol cleavage of N-acetylneuraminic acid (sialic acid; Neu5Ac) to form pyruvate and N-acetylmannosamine (ManNAc) via a Schiff base intermediate. This chain is N-acetylneuraminate lyase, found in Escherichia coli (strain SE11).